Reading from the N-terminus, the 98-residue chain is NADH-ubiquinone oxidoreductase chain 4L (98 aa).

Transmembrane regions (helical) follow at residues 1–21 (MSSIYMNILLAFTMALLGLLM), 29–49 (SLLCLEGMMLSLFILSTVTML), and 61–81 (VMLMVFAACEAAVGLALLVTV).

It belongs to the complex I subunit 4L family. As to quaternary structure, core subunit of respiratory chain NADH dehydrogenase (Complex I) which is composed of 45 different subunits.

The protein resides in the mitochondrion inner membrane. The enzyme catalyses a ubiquinone + NADH + 5 H(+)(in) = a ubiquinol + NAD(+) + 4 H(+)(out). In terms of biological role, core subunit of the mitochondrial membrane respiratory chain NADH dehydrogenase (Complex I) which catalyzes electron transfer from NADH through the respiratory chain, using ubiquinone as an electron acceptor. Part of the enzyme membrane arm which is embedded in the lipid bilayer and involved in proton translocation. The protein is NADH-ubiquinone oxidoreductase chain 4L (MT-ND4L) of Tamandua tetradactyla (Southern anteater).